Reading from the N-terminus, the 231-residue chain is Putative carboxymethylenebutenolidase (231 aa).

Catalysis depends on residues Cys118, Asp167, and His199.

This sequence belongs to the dienelactone hydrolase family.

It catalyses the reaction 2-(5-oxo-2,5-dihydrofuran-2-ylidene)acetate + H2O = 4-oxohex-2-enedioate + H(+). The protein is Putative carboxymethylenebutenolidase of Aquifex aeolicus (strain VF5).